The following is a 232-amino-acid chain: Replicative helicase loading/DNA remodeling protein DnaD (232 aa).

Residues 1-98 (MKKQQFIDMQ…QNGIKFEKYS (98 aa)) are N-terminal domain. Residues 1-116 (MKKQQFIDMQ…YEYIQLAQNQ (116 aa)) form a DDBH1 region. The interval 99–205 (LQPLWGKLYE…VEQAKIHSQK (107 aa)) is C-terminal domain. The DDBH2 stretch occupies residues 131-200 (TIFEEEFARP…NGLKTVEQAK (70 aa)). Residues 206 to 232 (FRRVQAKQNEPQKEYKRQVPFYNWLEQ) are C-terminal tail.

It belongs to the DnaB/DnaD family. The DNA replisome assembles sequentially on oriC in this order; DnaA, DnaD, DnaB, DnaI-DnaC helicase. Homodimer. Homotetramer. Oligomerization in vitro is concentration dependent. Part of the replication restart primosome which assembles in this order; PriA, DnaD then DnaB. The preferred DNA substrate mimics an arrested DNA replication fork with unreplicated lagging strand. Interacts with DnaA, DnaB and PriA. Interaction with DnaB requires DnaD to dimerize.

The protein localises to the cytoplasm. With respect to regulation, recruitment to oriC requires DnaA but not DnaB, DnaC or DnaI and is blocked by SirA. Its function is as follows. Required to load replicative helicase DnaC onto replication forks. Binds to a DnaD recognition element (DRE) which has pairs of 5'-TnnT-3' motifs; there is a strong DRE at oriC opposite the DnaA-trios recognized by DnaA. During DNA replication from the origin of replication (oriC) in the DNA replisome, DnaD is required after DnaA, before DnaB and subsequent helicase DnaC loading. A component of the replication restart primosome, which reloads the replicative helicase on sites other than oriC. DnaB, DnaD and DnaI may also be required for a PriA-independent pathway of replication fork restart. DnaB and DnaD work together to allow DnaB access to single-stranded (ss)DNA. Has DNA remodeling activity that converts supercoiled plasmid into an open circular form; DnaD forms scaffolds inside the plasmid DNA. Plasmid relaxation incorporates both wrapping around the DnaD protein scaffold and simultaneous untwisting, no nicking of the DNA is seen. Also converts linear DNA into an open circular form. Disrupts a replicative helicase-DnaI complex. Inhibits the ability of DnaA-ATP to form a helix on DNA; does not disassemble preformed helices in vitro. Binds ssDNA, and replication fork-like substrates, supercoiled plasmid, but not stably to short double-stranded (ds)DNA. DnaD stimulates DnaB DNA-binding activities. DnaB and DnaD are required to load helicase on the repN plasmid origin of replication (oriN). Causes a severe growth defect upon overexpression even in an oriC-independent strain. In Bacillus subtilis (strain 168), this protein is Replicative helicase loading/DNA remodeling protein DnaD.